A 616-amino-acid chain; its full sequence is Dihydroxy-acid dehydratase (616 aa).

Residue Asp81 coordinates Mg(2+). Cys122 lines the [2Fe-2S] cluster pocket. Mg(2+) contacts are provided by Asp123 and Lys124. Lys124 is modified (N6-carboxylysine). A [2Fe-2S] cluster-binding site is contributed by Cys195. Glu491 is a binding site for Mg(2+). Catalysis depends on Ser517, which acts as the Proton acceptor.

Belongs to the IlvD/Edd family. As to quaternary structure, homodimer. [2Fe-2S] cluster serves as cofactor. It depends on Mg(2+) as a cofactor.

It carries out the reaction (2R)-2,3-dihydroxy-3-methylbutanoate = 3-methyl-2-oxobutanoate + H2O. The catalysed reaction is (2R,3R)-2,3-dihydroxy-3-methylpentanoate = (S)-3-methyl-2-oxopentanoate + H2O. It participates in amino-acid biosynthesis; L-isoleucine biosynthesis; L-isoleucine from 2-oxobutanoate: step 3/4. Its pathway is amino-acid biosynthesis; L-valine biosynthesis; L-valine from pyruvate: step 3/4. Functionally, functions in the biosynthesis of branched-chain amino acids. Catalyzes the dehydration of (2R,3R)-2,3-dihydroxy-3-methylpentanoate (2,3-dihydroxy-3-methylvalerate) into 2-oxo-3-methylpentanoate (2-oxo-3-methylvalerate) and of (2R)-2,3-dihydroxy-3-methylbutanoate (2,3-dihydroxyisovalerate) into 2-oxo-3-methylbutanoate (2-oxoisovalerate), the penultimate precursor to L-isoleucine and L-valine, respectively. The sequence is that of Dihydroxy-acid dehydratase from Methylobacillus flagellatus (strain ATCC 51484 / DSM 6875 / VKM B-1610 / KT).